The primary structure comprises 467 residues: MNNPDLPYRQALECLSQKQYNFTEVRRLLTEAFSAGHPAAAFELAKHLMDADSPYQDREQGMEMLRIAAEQGHPYARYNLAYIQELEGAPPETLIPLYRPLAEEGLPEAQVRLMYLLYASRHFEEALEWAKTSAKNNNPHGQYLLAQYCRYGTPPDFETAHLLYRKSAAQGLPEAHWQLGLQYRFGQGTKVDTAQAVNHLRAAAQQGYIPAYTPLAELILPTAPDEAVHWFQQAAQENDPDAHAALADIYLQGKHLERNHKLALHHAEAAAAERHPEGLRILGDICRYGLGIAPDTEKARHYYRQAAEAGSLSAYQKLISDSALNHPDQYGGIKDSAIRRQRAERLYQKAQALHYGLQCAPEYAAALKLYTEAAELGHSKAQTNLGSMYYFGQGMTADYNEARKWFEKAAAKKDSMAFYNLACIHYSGHGVEPDKEKACRYLQEAINNGYGQKSVLQELLQQWQNAV.

Sel1-like repeat units lie at residues 38–73 (PAAAFELAKHLMDADSPYQDREQGMEMLRIAAEQGH), 107–138 (PEAQVRLMYLLYASRHFEEALEWAKTSAKNNN), 139–172 (PHGQYLLAQYCRYGTPPDFETAHLLYRKSAAQGL), 173–208 (PEAHWQLGLQYRFGQGTKVDTAQAVNHLRAAAQQGY), 240–275 (PDAHAALADIYLQGKHLERNHKLALHHAEAAAAERH), 276–311 (PEGLRILGDICRYGLGIAPDTEKARHYYRQAAEAGS), 343–378 (AERLYQKAQALHYGLQCAPEYAAALKLYTEAAELGH), 379–414 (SKAQTNLGSMYYFGQGMTADYNEARKWFEKAAAKKD), and 415–450 (SMAFYNLACIHYSGHGVEPDKEKACRYLQEAINNGY).

This is an uncharacterized protein from Neisseria meningitidis serogroup B (strain ATCC BAA-335 / MC58).